Consider the following 328-residue polypeptide: MMQDLRLILIVVGAIAIIALLLHGLWTSRKERSSLFRDRPVKRTKQERVETPIESLDEGVGEVRVRTSHPQEKPSFNHLDDDDDEVPVIQHAETKSAQVKTASRQAPFASVQTDYDDPLLGGLSAEQPPHDLSRDPLLGKADESYSQPQHAEPPHVEKPAHQVAPQQHVESQQEPVAPAPEAKPQKLKETVLVLHVAAHHGGVIGGEVLLQSVLQSGFQFGEMGIFHRHLSPAGSGPVLFSLANMVKPGSFDPDTMSDFSTPGVSMFMMVPSYGDANQNFKLMLQSAQRIADDVGGVVLDDERRMMTPQKLESYKARIREVLDANTIA.

Topologically, residues 1–6 (MMQDLR) are periplasmic. A helical membrane pass occupies residues 7–27 (LILIVVGAIAIIALLLHGLWT). Residues 28-328 (SRKERSSLFR…REVLDANTIA (301 aa)) lie on the Cytoplasmic side of the membrane. The span at 61 to 72 (GEVRVRTSHPQE) shows a compositional bias: basic and acidic residues. The tract at residues 61-183 (GEVRVRTSHP…EPVAPAPEAK (123 aa)) is disordered. Composition is skewed to polar residues over residues 95-104 (KSAQVKTASR) and 164-174 (APQQHVESQQE).

It belongs to the ZipA family. As to quaternary structure, interacts with FtsZ via their C-terminal domains.

Its subcellular location is the cell inner membrane. Functionally, essential cell division protein that stabilizes the FtsZ protofilaments by cross-linking them and that serves as a cytoplasmic membrane anchor for the Z ring. Also required for the recruitment to the septal ring of downstream cell division proteins. The protein is Cell division protein ZipA of Yersinia pestis bv. Antiqua (strain Antiqua).